A 494-amino-acid polypeptide reads, in one-letter code: Bifunctional pantoate ligase/cytidylate kinase (494 aa).

Positions 1–258 (MHFVPTMGGL…CGSTRLIDHA (258 aa)) are pantoate--beta-alanine ligase. 7–14 (MGGLHHGH) serves as a coordination point for ATP. Residue histidine 14 is the Proton donor of the active site. Residue glutamine 41 participates in (R)-pantoate binding. Glutamine 41 contributes to the beta-alanine binding site. Position 130-133 (130-133 (GEKD)) interacts with ATP. Residue glutamine 136 participates in (R)-pantoate binding. Residues valine 159 and 167–170 (SSSR) contribute to the ATP site. The cytidylate kinase stretch occupies residues 259 to 494 (FLMTRSPLVA…VGEEVWPTPV (236 aa)).

In the N-terminal section; belongs to the pantothenate synthetase family. It in the C-terminal section; belongs to the cytidylate kinase family. Type 1 subfamily.

The protein resides in the cytoplasm. The enzyme catalyses (R)-pantoate + beta-alanine + ATP = (R)-pantothenate + AMP + diphosphate + H(+). The catalysed reaction is CMP + ATP = CDP + ADP. It carries out the reaction dCMP + ATP = dCDP + ADP. It functions in the pathway cofactor biosynthesis; (R)-pantothenate biosynthesis; (R)-pantothenate from (R)-pantoate and beta-alanine: step 1/1. In terms of biological role, catalyzes the condensation of pantoate with beta-alanine in an ATP-dependent reaction via a pantoyl-adenylate intermediate. Functionally, catalyzes the transfer of a phosphate group from ATP to either CMP or dCMP to form CDP or dCDP and ADP, respectively. The polypeptide is Bifunctional pantoate ligase/cytidylate kinase (Synechococcus sp. (strain CC9311)).